The sequence spans 241 residues: MSLKAISAKDAASLDKDLMEMGGWSLDQLMELAGLSVSQAGMWSIYRLHPPSAGKNVLVVCGPGNNGGDGLVAARHLAQYGYTPSVYYPKEGKNELYQRLKTQLHNLSVPFVPDFTEALKSADFLVDAIFGFSFGGPLREPFPSIISQIESSSVPVLSVDAPSSWDIQSGPPKEGPGSKFMPKALISLTAPKPCVKYYRGRHFVGGRFLTKSIVEKYGLNCPDYPGIDQIVEVGVDAEGRL.

The YjeF N-terminal domain occupies 11–221 (AASLDKDLME…SIVEKYGLNC (211 aa)). Position 65-69 (65-69 (NNGGD)) interacts with (6S)-NADPHX. K(+) is bound by residues Asn66 and Asp127. (6S)-NADPHX-binding positions include 131–137 (GFSFGGP) and Asp160. Ser163 lines the K(+) pocket.

This sequence belongs to the NnrE/AIBP family. K(+) is required as a cofactor.

The protein resides in the cytoplasm. The protein localises to the mitochondrion. It catalyses the reaction (6R)-NADHX = (6S)-NADHX. It carries out the reaction (6R)-NADPHX = (6S)-NADPHX. In terms of biological role, catalyzes the epimerization of the S- and R-forms of NAD(P)HX, a damaged form of NAD(P)H that is a result of enzymatic or heat-dependent hydration. This is a prerequisite for the S-specific NAD(P)H-hydrate dehydratase to allow the repair of both epimers of NAD(P)HX. In Aspergillus fumigatus (strain ATCC MYA-4609 / CBS 101355 / FGSC A1100 / Af293) (Neosartorya fumigata), this protein is NAD(P)H-hydrate epimerase.